We begin with the raw amino-acid sequence, 147 residues long: Large ribosomal subunit protein uL15 (147 aa).

Over residues 1-28 (MIRRRKKVRKLRGSHTHGWGCKKKHRGG) the composition is skewed to basic residues. A disordered region spans residues 1-43 (MIRRRKKVRKLRGSHTHGWGCKKKHRGGGSKGGRGMAGTGKRN). Over residues 29 to 38 (GSKGGRGMAG) the composition is skewed to gly residues.

It belongs to the universal ribosomal protein uL15 family. As to quaternary structure, part of the 50S ribosomal subunit.

Binds to the 23S rRNA. In Pyrococcus horikoshii (strain ATCC 700860 / DSM 12428 / JCM 9974 / NBRC 100139 / OT-3), this protein is Large ribosomal subunit protein uL15.